A 321-amino-acid polypeptide reads, in one-letter code: Peroxidase 70 (321 aa).

Residues 1-25 form the signal peptide; that stretch reads MASSSFTSLSVMVLLCLAAAAVASA. Gln26 carries the pyrrolidone carboxylic acid modification. Cystine bridges form between Cys36-Cys116, Cys69-Cys74, Cys122-Cys317, and Cys201-Cys226. The active-site Proton acceptor is His67. Residues Asp68, Val71, Gly73, Asp75, and Ser77 each contribute to the Ca(2+) site. Asn81 is a glycosylation site (N-linked (GlcNAc...) asparagine). Position 164 (Pro164) interacts with substrate. Asn172 is a glycosylation site (N-linked (GlcNAc...) asparagine). His194 is a heme b binding site. Thr195 lines the Ca(2+) pocket. N-linked (GlcNAc...) asparagine glycosylation occurs at Asn210. 3 residues coordinate Ca(2+): Asp241, Thr244, and Asp249.

This sequence belongs to the peroxidase family. Classical plant (class III) peroxidase subfamily. Heme b is required as a cofactor. The cofactor is Ca(2+).

It is found in the secreted. It carries out the reaction 2 a phenolic donor + H2O2 = 2 a phenolic radical donor + 2 H2O. In terms of biological role, removal of H(2)O(2), oxidation of toxic reductants, biosynthesis and degradation of lignin, suberization, auxin catabolism, response to environmental stresses such as wounding, pathogen attack and oxidative stress. These functions might be dependent on each isozyme/isoform in each plant tissue. This Zea mays (Maize) protein is Peroxidase 70 (PER70).